Consider the following 363-residue polypeptide: 4-hydroxy-2-oxovalerate aldolase 1 (363 aa).

The Pyruvate carboxyltransferase domain occupies 13-265 (VRMTDTSLRD…KTGIDFFDIA (253 aa)). 21 to 22 (RD) is a binding site for substrate. D22 is a binding site for Mn(2+). H25 functions as the Proton acceptor in the catalytic mechanism. Substrate is bound by residues S175 and H204. Mn(2+) is bound by residues H204 and H206. Y295 is a substrate binding site.

Belongs to the 4-hydroxy-2-oxovalerate aldolase family.

The enzyme catalyses (S)-4-hydroxy-2-oxopentanoate = acetaldehyde + pyruvate. The polypeptide is 4-hydroxy-2-oxovalerate aldolase 1 (Mycobacterium sp. (strain JLS)).